Here is an 84-residue protein sequence, read N- to C-terminus: Acyl-CoA-binding protein (84 aa).

Residues 1–84 (MTTFEEAAQK…LYEQLATKYA (84 aa)) enclose the ACB domain. An acyl-CoA contacts are provided by residues Lys12, 27–31 (YGLYK), Lys53, and Tyr72.

This sequence belongs to the ACBP family. As to quaternary structure, interacts with dhkA.

Its function is as follows. Binds to acyl-CoA. Processed into the SDF-2 (spore differentiation factor 2) a peptide which triggers sporulation. SDF-2 appears to stimulate prestalk cells to release additional SDF-2 by acting through a signal transduction pathway that also involves dhkA, regA and PKA. Induces encapsulation of prespore cells in a dhkA-dependent manner. GABA induces the release of acbA from prespore cells and induces the exposure of tagC on the surface of prestalk cells where it can convert acbA to SDF-2. Glutamate acts as a competitive inhibitor and is also able to inhibit induction of sporulation by SDF-2. This is Acyl-CoA-binding protein (acbA) from Dictyostelium discoideum (Social amoeba).